A 78-amino-acid chain; its full sequence is MALKKPENMHYEEAIDELENIVNHLEVGDLALEDALKQFERGIALARSNNQKLQKAQQQVNILMQQDAQAPLQEFNDE.

This sequence belongs to the XseB family. As to quaternary structure, heterooligomer composed of large and small subunits.

It localises to the cytoplasm. The catalysed reaction is Exonucleolytic cleavage in either 5'- to 3'- or 3'- to 5'-direction to yield nucleoside 5'-phosphates.. Functionally, bidirectionally degrades single-stranded DNA into large acid-insoluble oligonucleotides, which are then degraded further into small acid-soluble oligonucleotides. This chain is Exodeoxyribonuclease 7 small subunit, found in Psychromonas ingrahamii (strain DSM 17664 / CCUG 51855 / 37).